The chain runs to 720 residues: NAD(P)H-quinone oxidoreductase subunit 5, chloroplastic (720 aa).

The next 16 membrane-spanning stretches (helical) occupy residues 9 to 29, 39 to 59, 87 to 107, 125 to 145, 147 to 167, 189 to 209, 221 to 239, 258 to 278, 286 to 306, 327 to 347, 354 to 374, 395 to 415, 434 to 454, 530 to 550, 590 to 610, and 700 to 720; these read WIVPFFPFIASILIGVNLLFF, IWAIFSILLLSIAMIFSFNIL, FLIDPLTSIMLVLITTVGVLV, FAYLSLFTASMLGLVLSPNLI, IYIFWELVGMCSYLLIGFWFT, LLLGILGFYWITGSFEFEILF, VNLYFANFCALLLFLGPIA, TPISALIHAATMVAAGIFLVA, LLPFVMTIISWVGAITAFLGA, LGYMMLALGIGSYQAGLFHLI, ALLFLGSGSVIHSVESIVGYS, GITFLLGTFSLCGIPPFACFW, ISLVTAGLTAFYMFRIYFLTF, LFPLLVLTLPTLFIGFLGAPF, LSVVFSGIFIAFILYGPFSLF, and LFGLIFGMIILLFIGFFGAMF.

Belongs to the complex I subunit 5 family. In terms of assembly, NDH is composed of at least 16 different subunits, 5 of which are encoded in the nucleus.

It is found in the plastid. It localises to the chloroplast thylakoid membrane. It catalyses the reaction a plastoquinone + NADH + (n+1) H(+)(in) = a plastoquinol + NAD(+) + n H(+)(out). The enzyme catalyses a plastoquinone + NADPH + (n+1) H(+)(in) = a plastoquinol + NADP(+) + n H(+)(out). Functionally, NDH shuttles electrons from NAD(P)H:plastoquinone, via FMN and iron-sulfur (Fe-S) centers, to quinones in the photosynthetic chain and possibly in a chloroplast respiratory chain. The immediate electron acceptor for the enzyme in this species is believed to be plastoquinone. Couples the redox reaction to proton translocation, and thus conserves the redox energy in a proton gradient. The sequence is that of NAD(P)H-quinone oxidoreductase subunit 5, chloroplastic (ndhF) from Physcomitrium patens (Spreading-leaved earth moss).